The following is a 277-amino-acid chain: MSMTKIPLAGVMGAPIAHSKSPQLHRHWLETYGISGFYVPMEVKAADVEHVLRTLPKMGFVGLNVTLPHKEAVLKLADQITDRARLIGAANTLTFGKDGEIHADNTDGYGFLENLRSGATDWTPSQGPAVVLGAGGAARAVIVALLDAGVPEIILTNRTRARSDQLQSDFGNRVRVMDWTQISGVLHEAQLLVNTTSLGMVGKPEMEASLDGLQAHTTVTDLVYNPLKTRLLEVAEEKGCVTVDGLGMLLHQGVPGFERWFGRRPDVTDATRAAVLG.

Residues 19 to 21 (SKS) and Thr-66 contribute to the shikimate site. Lys-70 functions as the Proton acceptor in the catalytic mechanism. NADP(+) is bound at residue Asp-82. Shikimate is bound by residues Asn-91 and Asp-107. Residues 133–137 (GAGGA), 157–162 (NRTRAR), and Leu-222 contribute to the NADP(+) site. Tyr-224 provides a ligand contact to shikimate. Residue Gly-245 coordinates NADP(+).

It belongs to the shikimate dehydrogenase family. Homodimer.

It catalyses the reaction shikimate + NADP(+) = 3-dehydroshikimate + NADPH + H(+). It functions in the pathway metabolic intermediate biosynthesis; chorismate biosynthesis; chorismate from D-erythrose 4-phosphate and phosphoenolpyruvate: step 4/7. In terms of biological role, involved in the biosynthesis of the chorismate, which leads to the biosynthesis of aromatic amino acids. Catalyzes the reversible NADPH linked reduction of 3-dehydroshikimate (DHSA) to yield shikimate (SA). This chain is Shikimate dehydrogenase (NADP(+)), found in Roseobacter denitrificans (strain ATCC 33942 / OCh 114) (Erythrobacter sp. (strain OCh 114)).